The primary structure comprises 305 residues: Tyrosine recombinase XerC (305 aa).

The Core-binding (CB) domain occupies 1–93 (MVLDGFAAHF…SWRQYCVWLV (93 aa)). The 181-residue stretch at 114–294 (RVPKALPQEW…DFDHIARLYD (181 aa)) folds into the Tyr recombinase domain. Catalysis depends on residues R155, K179, H246, R249, and H272. Y281 (O-(3'-phospho-DNA)-tyrosine intermediate) is an active-site residue.

It belongs to the 'phage' integrase family. XerC subfamily. In terms of assembly, forms a cyclic heterotetrameric complex composed of two molecules of XerC and two molecules of XerD.

The protein resides in the cytoplasm. Site-specific tyrosine recombinase, which acts by catalyzing the cutting and rejoining of the recombining DNA molecules. The XerC-XerD complex is essential to convert dimers of the bacterial chromosome into monomers to permit their segregation at cell division. It also contributes to the segregational stability of plasmids. This Neisseria meningitidis serogroup C (strain 053442) protein is Tyrosine recombinase XerC.